Here is a 480-residue protein sequence, read N- to C-terminus: PTS system sucrose-specific EIIBC component (480 aa).

Residues 4–87 (KKSAENILQA…EKITGKEASS (84 aa)) enclose the PTS EIIB type-1 domain. The Phosphocysteine intermediate; for EIIB activity role is filled by C26. 8 helical membrane passes run 109 to 129 (LSDIFVPIIPAIVAGGLLMGI), 158 to 178 (MINIFANAPFTLLPILIGFSA), 182 to 202 (FGGNAYLGAALGMILVHPELM), 264 to 284 (LLTPLLAILSTGFITFSFVGP), 303 to 323 (FGGAIGGLIFGLLYAPIVITG), 349 to 369 (PIATMSNIAQGAAALAAFFII), 405 to 425 (PFIGAIVGSGIGSAYIAFFKV), and 449 to 469 (LHYGIAMIIAFIVAFGVTYAL). One can recognise a PTS EIIC type-1 domain in the interval 120 to 480 (IVAGGLLMGI…YRKKYRNIEA (361 aa)).

It is found in the cell membrane. It carries out the reaction N(pros)-phospho-L-histidyl-[protein](out) + sucrose = sucrose 6(G)-phosphate(in) + L-histidyl-[protein]. Its function is as follows. The phosphoenolpyruvate-dependent sugar phosphotransferase system (sugar PTS), a major carbohydrate active transport system, catalyzes the phosphorylation of incoming sugar substrates concomitantly with their translocation across the cell membrane. This system is involved in sucrose transport. This Staphylococcus xylosus protein is PTS system sucrose-specific EIIBC component.